A 339-amino-acid polypeptide reads, in one-letter code: Sperm acrosome membrane-associated protein 6 (339 aa).

Positions 1-41 (MTSQRSLSSPQTRRPSVMGLISLVGSIVLLFLLIFRASTWA) are cleaved as a signal peptide. A CXXC motif motif is present at residues 42 to 45 (CLFC). Disulfide bonds link Cys42/Cys155, Cys45/Cys158, Cys56/Cys70, Cys140/Cys163, Cys144/Cys169, and Cys186/Cys241. The Extracellular portion of the chain corresponds to 42–310 (CLFCFTTYEE…NPQALTLGNL (269 aa)). The CXXC motif signature appears at 155–158 (CSGC). The 86-residue stretch at 166 to 251 (PLDCPVQDML…VILHDQRPLA (86 aa)) folds into the Ig-like domain. Asn258 carries N-linked (GlcNAc...) asparagine glycosylation. The helical transmembrane segment at 311 to 331 (FLLAATAALGSASVTLLVWLF) threads the bilayer. The Cytoplasmic segment spans residues 332–339 (FRWYLSGN).

The protein belongs to the SPACA6 family. Forms a complex with IZUMO1 and TMEM81 on spermatocyte cell membrane required for fertilization. In terms of tissue distribution, highly expressed in testis. Minor expression also detected in epididymis, seminal vesicle and ovary. Predominantly expressed in testicular germ cells during spermiogenesis. Most abundant in round spermatids and detected at lower levels in elongating spermatids.

The protein resides in the cytoplasmic vesicle. It localises to the secretory vesicle. The protein localises to the acrosome membrane. In terms of biological role, sperm protein required for fusion of sperm with the egg membrane during fertilization. May regulate the expression of sperm surface protein DCST2. This Mus musculus (Mouse) protein is Sperm acrosome membrane-associated protein 6.